A 72-amino-acid polypeptide reads, in one-letter code: uncharacterized protein (72 aa).

Residues 51–72 are disordered; it reads AKGGRQKGEVVGVDDQCKEHKE.

Belongs to the YiiE family.

This is an uncharacterized protein from Escherichia coli O157:H7.